The primary structure comprises 207 residues: 3-demethoxyubiquinol 3-hydroxylase (207 aa).

Residues Glu-56, Glu-86, His-89, Glu-138, Glu-170, and His-173 each coordinate Fe cation.

Belongs to the COQ7 family. Fe cation is required as a cofactor.

It is found in the cell membrane. The catalysed reaction is a 5-methoxy-2-methyl-3-(all-trans-polyprenyl)benzene-1,4-diol + AH2 + O2 = a 3-demethylubiquinol + A + H2O. It functions in the pathway cofactor biosynthesis; ubiquinone biosynthesis. Its function is as follows. Catalyzes the hydroxylation of 2-nonaprenyl-3-methyl-6-methoxy-1,4-benzoquinol during ubiquinone biosynthesis. In Dechloromonas aromatica (strain RCB), this protein is 3-demethoxyubiquinol 3-hydroxylase.